A 109-amino-acid polypeptide reads, in one-letter code: Parvalbumin alpha (109 aa).

2 EF-hand domains span residues 38-73 (KTDA…FSAH) and 77-109 (LNDT…VAQA). 9 residues coordinate Ca(2+): D51, D53, S55, E62, D90, D92, D94, K96, and E101.

Belongs to the parvalbumin family.

In muscle, parvalbumin is thought to be involved in relaxation after contraction. It binds two calcium ions. The chain is Parvalbumin alpha from Triakis semifasciata (Leopard shark).